A 147-amino-acid polypeptide reads, in one-letter code: Large ribosomal subunit protein uL11 (147 aa).

The protein belongs to the universal ribosomal protein uL11 family. Part of the ribosomal stalk of the 50S ribosomal subunit. Interacts with L10 and the large rRNA to form the base of the stalk. L10 forms an elongated spine to which L12 dimers bind in a sequential fashion forming a multimeric L10(L12)X complex. In terms of processing, one or more lysine residues are methylated.

Functionally, forms part of the ribosomal stalk which helps the ribosome interact with GTP-bound translation factors. This is Large ribosomal subunit protein uL11 from Metamycoplasma arthritidis (strain 158L3-1) (Mycoplasma arthritidis).